The primary structure comprises 88 residues: Small ribosomal subunit protein bS20 (88 aa).

The tract at residues 1–27 is disordered; sequence MANTPQAKKRARQNEKARKHNASMRSM. Residues 7 to 22 show a composition bias toward basic residues; that stretch reads AKKRARQNEKARKHNA.

This sequence belongs to the bacterial ribosomal protein bS20 family.

Its function is as follows. Binds directly to 16S ribosomal RNA. The protein is Small ribosomal subunit protein bS20 of Cellvibrio japonicus (strain Ueda107) (Pseudomonas fluorescens subsp. cellulosa).